The chain runs to 88 residues: Small ribosomal subunit protein uS15 (88 aa).

Belongs to the universal ribosomal protein uS15 family. As to quaternary structure, part of the 30S ribosomal subunit. Forms a bridge to the 50S subunit in the 70S ribosome, contacting the 23S rRNA.

Its function is as follows. One of the primary rRNA binding proteins, it binds directly to 16S rRNA where it helps nucleate assembly of the platform of the 30S subunit by binding and bridging several RNA helices of the 16S rRNA. Forms an intersubunit bridge (bridge B4) with the 23S rRNA of the 50S subunit in the ribosome. The sequence is that of Small ribosomal subunit protein uS15 from Geobacter sp. (strain M21).